Reading from the N-terminus, the 787-residue chain is Lysine-specific demethylase JMJ13 (787 aa).

Positions 103–144 (CPVYRPTKEEFEDPLTYLQKIFPEASKYGICKIVSPLTATVP) constitute a JmjN domain. Residues 250 to 420 (SSKWNLNKVS…FGAIASCRYA (171 aa)) enclose the JmjC domain. Residues histidine 293, glutamate 295, and histidine 388 each coordinate Fe cation. Cysteine 500, cysteine 503, cysteine 514, cysteine 516, histidine 519, cysteine 522, histidine 525, and cysteine 534 together coordinate Zn(2+). The C4HCHC zinc finger occupies 500–551 (CSLCKRDCYLAFINCECYSHPVCLRHDVKKLDLPCGTTHTLYLRDNIEDMEA). A C5HC2 zinc finger spans residues 500–551 (CSLCKRDCYLAFINCECYSHPVCLRHDVKKLDLPCGTTHTLYLRDNIEDMEA). Residues 617–675 (VMSYEANASCISSVADDYECSDYVNRRANCSSSSDSKLSEEVACSSSKKTRFFPVVQDE) form the FYR N-terminal domain. Residues 677 to 756 (LVADQESDGS…ELVISNRKET (80 aa)) form the FYR C-terminal domain. The tract at residues 712–769 (ESDHHQELKRLKKSHHHEGRYSSSSSVSRQEEEEDELVISNRKETQQQSDVKMQKKRI) is disordered. A Nuclear localization signal motif is present at residues 752–759 (NRKETQQQ).

The protein belongs to the JARID1 histone demethylase family. Fe(2+) serves as cofactor. As to expression, mostly expressed in leaves, and, to a lower extent, in inflorescences, roots, siliques and stems.

It localises to the nucleus. The enzyme catalyses N(6),N(6),N(6)-trimethyl-L-lysyl(27)-[histone H3] + 2-oxoglutarate + O2 = N(6),N(6)-dimethyl-L-lysyl(27)-[histone H3] + formaldehyde + succinate + CO2. In terms of biological role, histone demethylase that demethylates 'Lys-27' (H3K27me) of histone H3 with a specific activity for H3K27me3 and involved in the regulation of gene expression. Acts as a temperature and photoperiod dependent flowering repressor. The protein is Lysine-specific demethylase JMJ13 of Arabidopsis thaliana (Mouse-ear cress).